The sequence spans 133 residues: FPRL1 inhibitory protein (133 aa).

An N-terminal signal peptide occupies residues 1 to 28 (MKKNITKTIIASTVIAAGLLTQTNDAKA).

It belongs to the CHIPS/FLIPr family.

The protein resides in the secreted. May be involved in countering the first line of host defense mechanisms. Impairs the leukocyte response to FPRL1 agonists by binding directly to host FPRL1. In Staphylococcus aureus (strain Mu50 / ATCC 700699), this protein is FPRL1 inhibitory protein (flr).